The sequence spans 469 residues: Glutamate--tRNA ligase (469 aa).

The 'HIGH' region signature appears at 9 to 19 (PSPTGFLHVGG). Zn(2+) is bound by residues C98, C100, C125, and D127. The short motif at 236–240 (KLSKR) is the 'KMSKS' region element. K239 is a binding site for ATP.

It belongs to the class-I aminoacyl-tRNA synthetase family. Glutamate--tRNA ligase type 1 subfamily. Monomer. Requires Zn(2+) as cofactor.

The protein resides in the cytoplasm. It catalyses the reaction tRNA(Glu) + L-glutamate + ATP = L-glutamyl-tRNA(Glu) + AMP + diphosphate. Functionally, catalyzes the attachment of glutamate to tRNA(Glu) in a two-step reaction: glutamate is first activated by ATP to form Glu-AMP and then transferred to the acceptor end of tRNA(Glu). This chain is Glutamate--tRNA ligase, found in Shewanella loihica (strain ATCC BAA-1088 / PV-4).